A 510-amino-acid polypeptide reads, in one-letter code: Nectin-4 (510 aa).

Residues 1 to 31 (MPLSLGAEMWGPEAWLLLLLLLASFTGRCPA) form the signal peptide. Positions 32-144 (GELETSDVVT…GSFQARLRLR (113 aa)) constitute an Ig-like V-type domain. The Extracellular segment spans residues 32 to 349 (GELETSDVVT…GKQVDLVSAS (318 aa)). 3 disulfide bridges follow: C52–C127, C171–C223, and C270–C315. Ig-like C2-type domains lie at 148-237 (PPLP…QRIT) and 248-331 (ASVR…VTVD). Residue N281 is glycosylated (N-linked (GlcNAc...) asparagine). Residues 350-370 (VVVVGVIAALLFCLLVVVVVL) traverse the membrane as a helical segment. Over 371–510 (MSRYHRRKAQ…IYINGRGHLV (140 aa)) the chain is Cytoplasmic. Over residues 399–412 (RRLHSHHTDPRSQP) the composition is skewed to basic and acidic residues. Disordered regions lie at residues 399–447 (RRLH…SYST) and 457–476 (QTEL…DQDE).

This sequence belongs to the nectin family. As to quaternary structure, self-associates. Interacts via its Ig-like V-type domain with NECTIN1 Ig-like V-type domain. Interacts via its C-terminus with AFDN. (Microbial infection) Interacts (via N-terminus) with measles virus hemagglutinin protein. The soluble form is produced by proteolytic cleavage at the cell surface (shedding), probably by ADAM17/TACE. As to expression, predominantly expressed in placenta. Not detected in normal breast epithelium but expressed in breast carcinoma.

It is found in the cell membrane. The protein localises to the cell junction. It localises to the adherens junction. Its subcellular location is the secreted. Seems to be involved in cell adhesion through trans-homophilic and -heterophilic interactions, the latter including specifically interactions with NECTIN1. Does not act as receptor for alpha-herpesvirus entry into cells. In terms of biological role, (Microbial infection) Acts as a receptor for measles virus. This is Nectin-4 from Homo sapiens (Human).